We begin with the raw amino-acid sequence, 477 residues long: tRNA-2-methylthio-N(6)-dimethylallyladenosine synthase (477 aa).

The region spanning 9–129 (RKLHIKSYGC…LPQLLARAKT (121 aa)) is the MTTase N-terminal domain. [4Fe-4S] cluster-binding residues include cysteine 18, cysteine 54, cysteine 92, cysteine 170, cysteine 174, and cysteine 177. Residues 156–386 (RSRGISAFVT…QLQNLIDSQQ (231 aa)) enclose the Radical SAM core domain. The TRAM domain maps to 391–453 (RTALGRTIDV…RYSLFGTLAS (63 aa)). The segment at 454–477 (KPTSGEPSNHAATGGAQFQTTAGA) is disordered. The segment covering 464–477 (AATGGAQFQTTAGA) has biased composition (low complexity).

It belongs to the methylthiotransferase family. MiaB subfamily. Monomer. Requires [4Fe-4S] cluster as cofactor.

The protein resides in the cytoplasm. It catalyses the reaction N(6)-dimethylallyladenosine(37) in tRNA + (sulfur carrier)-SH + AH2 + 2 S-adenosyl-L-methionine = 2-methylsulfanyl-N(6)-dimethylallyladenosine(37) in tRNA + (sulfur carrier)-H + 5'-deoxyadenosine + L-methionine + A + S-adenosyl-L-homocysteine + 2 H(+). Its function is as follows. Catalyzes the methylthiolation of N6-(dimethylallyl)adenosine (i(6)A), leading to the formation of 2-methylthio-N6-(dimethylallyl)adenosine (ms(2)i(6)A) at position 37 in tRNAs that read codons beginning with uridine. The protein is tRNA-2-methylthio-N(6)-dimethylallyladenosine synthase of Nitrobacter winogradskyi (strain ATCC 25391 / DSM 10237 / CIP 104748 / NCIMB 11846 / Nb-255).